A 323-amino-acid chain; its full sequence is Acetyl esterase (323 aa).

The Involved in the stabilization of the negatively charged intermediate by the formation of the oxyanion hole signature appears at histidine 91–glycine 93. Catalysis depends on residues serine 165, aspartate 262, and histidine 292.

It belongs to the 'GDXG' lipolytic enzyme family. As to quaternary structure, homodimer. Interacts with MalT and MelA.

The protein localises to the cytoplasm. Its function is as follows. Displays esterase activity towards short chain fatty esters (acyl chain length of up to 8 carbons). Able to hydrolyze triacetylglycerol (triacetin) and tributyrylglycerol (tributyrin), but not trioleylglycerol (triolein) or cholesterol oleate. Negatively regulates MalT activity by antagonizing maltotriose binding. Inhibits MelA galactosidase activity. This chain is Acetyl esterase, found in Salmonella paratyphi B (strain ATCC BAA-1250 / SPB7).